The primary structure comprises 207 residues: N-(5'-phosphoribosyl)anthranilate isomerase (207 aa).

It belongs to the TrpF family.

The catalysed reaction is N-(5-phospho-beta-D-ribosyl)anthranilate = 1-(2-carboxyphenylamino)-1-deoxy-D-ribulose 5-phosphate. The protein operates within amino-acid biosynthesis; L-tryptophan biosynthesis; L-tryptophan from chorismate: step 3/5. The polypeptide is N-(5'-phosphoribosyl)anthranilate isomerase (Staphylococcus epidermidis (strain ATCC 35984 / DSM 28319 / BCRC 17069 / CCUG 31568 / BM 3577 / RP62A)).